Consider the following 734-residue polypeptide: MAPNLRIKKACDAMKLLGISETKTRAFLRKLLKTYENNWDFIEEDAYKVLLDAIFDEADAQSTEKNKKEEEKKKKEEEKKSRSVATSRGRRKAPEPLVQDEEDDMDEDEFPLKRRLRSRRGRASSSSSSSSSYNNEDLKTQPEEEDEDDGVTELPPLKRYVRRNGERGLAMTVYNNASPSSSSRLSMEPEEVPPMVLLPAHPMETKVSEASALVILNDEPNIDHKPVISDTGNCSAPMLEMGKSNIHVQEWDWETKDILNDTTAMDVSPSSAIGESSEHKVAAASVELASSTSGEAKICLSFAPATGETTNLHLPSMEDLRRAMEEKCLKSYKIVHPEFSVLGFMKDMCSCYIDLAKNSTSQLLETETVCDMSKAGDESGAVGISMPLVVVPECEISGDGWKAISNMKDITAGEENVEIPWVNEINEKVPSRFRYMPHSFVFQDAPVIFSLSSFSDEQSCSTSCIEDCLASEMSCNCAIGVDNGFAYTLDGLLKEEFLEARISEARDQRKQVLRFCEECPLERAKKVEILEPCKGHLKRGAIKECWFKCGCTKRCGNRVVQRGMHNKLQVFFTPNGKGWGLRTLEKLPKGAFICEYIGEILTIPELYQRSFEDKPTLPVILDAHWGSEERLEGDKALCLDGMFYGNISRFLNHRCLDANLIEIPVQVETPDQHYYHLAFFTTRDIEAMEELAWDYGIDFNDNDSLMKPFDCLCGSRFCRNKKRSTKTMQILNKA.

A disordered region spans residues 61 to 163 (QSTEKNKKEE…LPPLKRYVRR (103 aa)). The segment covering 62 to 81 (STEKNKKEEEKKKKEEEKKS) has biased composition (basic and acidic residues). Acidic residues predominate over residues 98–109 (VQDEEDDMDEDE). Positions 113–122 (KRRLRSRRGR) are enriched in basic residues. The segment covering 123-132 (ASSSSSSSSS) has biased composition (low complexity). 8 residues coordinate Zn(2+): Cys460, Cys464, Cys468, Cys477, Cys545, Cys549, Cys551, and Cys555. The Pre-SET domain maps to 460–563 (CSTSCIEDCL…RCGNRVVQRG (104 aa)). The SET domain maps to 566 to 696 (NKLQVFFTPN…AMEELAWDYG (131 aa)). S-adenosyl-L-methionine-binding positions include 577–579 (KGW) and 652–653 (NH). Cys655 contacts Zn(2+). Tyr695 is a binding site for S-adenosyl-L-methionine. In terms of domain architecture, Post-SET spans 707-723 (KPFDCLCGSRFCRNKKR). Positions 711, 713, and 718 each coordinate Zn(2+).

Belongs to the class V-like SAM-binding methyltransferase superfamily. Histone-lysine methyltransferase family. In terms of assembly, interacts with SUVR2 and itself.

Its subcellular location is the nucleus. It localises to the chromosome. Functionally, probable inactive histone-lysine methyltransferase that acts as regulator of transctiptional gene silencing independently of histone H3K9 methylation. Contributes to transcriptional gene silencing at RNA-directed DNA methylation (RdDM) target loci but also at RdDM-independent target loci. In Arabidopsis thaliana (Mouse-ear cress), this protein is Probable inactive histone-lysine N-methyltransferase SUVR1 (SUVR1).